The sequence spans 507 residues: uncharacterized protein (507 aa).

3 disordered regions span residues 91–162 (NEKT…KKLL), 174–255 (EKLQ…QQQQ), and 309–422 (KRKL…NYST). The segment covering 116–143 (DSSESDSSESESDSSESESESESNETSE) has biased composition (acidic residues). Residues 144–155 (NESSSSSEPESS) show a composition bias toward low complexity. A compositionally biased stretch (basic and acidic residues) spans 174-193 (EKLQQEQQKQKEAQKPKEKP). Low complexity-rich tracts occupy residues 194 to 236 (QQQQ…QQIE), 243 to 255 (PQQQ…QQQQ), and 313 to 350 (QSQL…TNKP). Over residues 351 to 360 (LSKRQKKLLK) the composition is skewed to basic residues. Low complexity predominate over residues 378–409 (NNKNDNSTNDSNNNNDNNNNNKNDTNDSNNDD).

This is an uncharacterized protein from Dictyostelium discoideum (Social amoeba).